The following is a 794-amino-acid chain: Hyaluronan mediated motility receptor (794 aa).

The tract at residues 1–87 is disordered; sequence MSFPKAPLKR…SQKNDKDVKR (87 aa). Residue Ser-20 is modified to Phosphoserine. Basic and acidic residues predominate over residues 74 to 87; it reads SKKDSQKNDKDVKR. N-linked (GlcNAc...) asparagine glycans are attached at residues Asn-134, Asn-279, Asn-446, Asn-467, Asn-488, Asn-509, Asn-530, Asn-561, and Asn-601. Residues 365 to 630 form a required for interaction with FAM83D region; it reads EEMTSEKNVF…ITDLKNQLRQ (266 aa). Tandem repeats lie at residues 442 to 462, 463 to 483, 484 to 504, 505 to 525, and 526 to 546. The 5 X 21 AA tandem repeats stretch occupies residues 442–546; it reads QEKYNDTAQS…RDVTAQLESY (105 aa). Hyaluronic acid-binding regions lie at residues 719-729 and 741-750; these read KQKIKHVVKLK and KLRSQLVKRK. Thr-784 carries the phosphothreonine modification.

As to quaternary structure, interacts with ANKRD26. Interacts with DYNLL1. Interacts with FAM83D/CHICA. Ubiquitously expressed.

Its subcellular location is the cell surface. The protein localises to the cytoplasm. It is found in the cytoskeleton. The protein resides in the spindle. In terms of biological role, receptor for hyaluronic acid (HA). Involved in cell motility. When hyaluronan binds to HMMR, the phosphorylation of a number of proteins, including the PTK2/FAK1 occurs. May also be involved in cellular transformation and metastasis formation, and in regulating extracellular-regulated kinase (ERK) activity. May act as a regulator of adipogenesis. In Mus musculus (Mouse), this protein is Hyaluronan mediated motility receptor (Hmmr).